A 158-amino-acid chain; its full sequence is Low molecular weight phosphotyrosine protein phosphatase (158 aa).

An N-acetylalanine modification is found at alanine 2. The active-site Nucleophile is the cysteine 13. The active site involves arginine 19. Aspartate 130 functions as the Proton donor in the catalytic mechanism. Phosphotyrosine is present on residues tyrosine 132 and tyrosine 133.

The protein belongs to the low molecular weight phosphotyrosine protein phosphatase family. Interacts with EPHA2; dephosphorylates EPHA2. Interacts with EPHB1. In terms of assembly, interacts with the SH3 domain of SPTAN1. There is no interaction observed for isoform 2. Post-translationally, phosphorylated by LCK. Phosphorylation at Tyr-132 increases its phosphatase activity. Widely expressed with highest levels in brain and liver and lowest levels in muscle.

Its subcellular location is the cytoplasm. It catalyses the reaction O-phospho-L-tyrosyl-[protein] + H2O = L-tyrosyl-[protein] + phosphate. The enzyme catalyses a phosphate monoester + H2O = an alcohol + phosphate. With respect to regulation, inhibited by sulfhydryl reagents. Acts on tyrosine phosphorylated proteins, low-MW aryl phosphates and natural and synthetic acyl phosphates with differences in substrate specificity between isoform 1 and isoform 2. The protein is Low molecular weight phosphotyrosine protein phosphatase of Mus musculus (Mouse).